The primary structure comprises 537 residues: Leucine-rich repeat LGI family member 4 (537 aa).

An N-terminal signal peptide occupies residues Met1–Ala19. 4 LRR repeats span residues Thr53–Lys74, Ser77–Gly98, Tyr101–Gly122, and Ser125–Gly146. Residues Asn158 to Ala208 form the LRRCT domain. An N-linked (GlcNAc...) asparagine glycan is attached at Asn177. EAR repeat units lie at residues Glu210–Tyr252, Arg256–Ser298, Arg302–Gly349, Gly351–Gly394, Arg396–Gly439, Met441–Ser483, and Ile487–Glu532.

In terms of assembly, can bind to ADAM11, ADAM22 and ADAM23. Brain. Expressed in the entire developing peripheral nerves. Strongly expressed in the trigeminal nerve and ganglion and particularly abundant in the boundary cap cells - a transient population of cells that contributes to the Schwann cell population of the dorsal root nerve.

The protein localises to the secreted. In terms of biological role, component of Schwann cell signaling pathway(s) that controls axon segregation and myelin formation. This Mus musculus (Mouse) protein is Leucine-rich repeat LGI family member 4 (Lgi4).